We begin with the raw amino-acid sequence, 852 residues long: Probable nitrite reductase-hydroxylamine oxidoreductase fusion protein (852 aa).

The signal sequence occupies residues 1–27; it reads MLNKSAALVPVVLAFLFLFLCFQCLYA. A nitrite reductase domain region spans residues 28–327; that stretch reads DIRCLTGKDG…DEGRKTLSAP (300 aa). Plastocyanin-like domains are found at residues 72–169 and 217–307; these read VPGP…IVEP and GETW…VEEG. Positions 102 and 145 each coordinate Cu cation. The segment at 328-827 is hydroxylamine oxidoreductase domain; sequence GQDRQPPTLE…ISWWWGTAQG (500 aa). Heme is bound by residues C406, C409, H410, H426, C463, C466, H467, H471, C483, C486, H487, H505, H537, C543, C546, H547, H550, C563, C566, H567, C614, C617, H618, C686, C689, H690, and H813.

In the N-terminal section; belongs to the multicopper oxidase family. It depends on Cu cation as a cofactor. Heme is required as a cofactor.

It localises to the encapsulin nanocompartment. The enzyme catalyses hydroxylamine + 4 Fe(III)-[cytochrome c] + H2O = 4 Fe(II)-[cytochrome c] + nitrite + 5 H(+). It catalyses the reaction nitric oxide + Fe(III)-[cytochrome c] + H2O = Fe(II)-[cytochrome c] + nitrite + 2 H(+). Functionally, a nitrite reductase-hydroxylamine oxidoreductase protein that probably functions in the type 1 encapsulin nanocompartment. Probably involved in reductive catalysis. Targeted to the encapsulin nanocompartment by association with the diheme domain of the encapsulin shell protein (AC Q1Q6L7). Catalyzes the reduction of nitrite to nitric oxide (NO). Catalyzes the oxidation of hydroxylamine to nitrite. This Kuenenia stuttgartiensis protein is Probable nitrite reductase-hydroxylamine oxidoreductase fusion protein.